A 1048-amino-acid chain; its full sequence is MKIFLLCIFLILCGTSVWAKDKHYYIGIIETAWNYASDHAEKKLISVDTEHSNIYLQNGPNRIGSVYKKAVYLQYTDENFRTVIEKPVWLGFLGPIIKAETGDKVYVHLKNFASRPYTFHAHGLTYYKEHEGAIYPDNTTDLQKADDKVQPGEQCLYILHANPEQGPGEEDSNCVTRIYHSHIDAPKDIASGLIGPLIHCKKDSLDEEKEKNIDKEFVVMFSVVDENLSWYLEENIKTYCSEPEKVEQDNEDFQESNRMYSVNGYAFGSLPGLSMCAEDRVKWYLFGMGNEIDVHAAFFHGQVLTSKNYRVDTINLFPATLFDAFMVAQNPGQWMLSCQNLNHLKAGLQAFFWVQDCKKSSSEDNIHGKNVRHYYIAAEEVIWNYAPSGIDAFTKENLRAPGSASEAFFEQGPTRIGGSYKKLVYREYTDASFSNQKERGPEEEHLGILGPVIAAEVGDTIRVTFHNKAAHPLSIEPIGVRVDKNNEGTYYSPTGSGPPPSGSHVAPKGTFTYEWTVPKEVGPTYKDPVCLAKMYYSGSTKDIFTGLIGPMKICRNGSLLANGRLKNVDKEFYLFPTVFDENESLLLDDNIKMFTTAPDQVDKENEDFQESNKMHSMNGFMYGNQPGLSMCQGDSVMWYLFSAGNEVDIHGIYFSGNTYLSRGERRDTANLFPQTSLSLFMQPDTAGTFDVECLTTDHYTGGMKQKYTVSQCGQRSEDLYLYLGERTYYIAAVEVEWDYSPSRKWEKELHHLQEQNLSNAFLDKEEFYIGSKYKKVVYRQFTDSTFQVPVERKGEEEHLGILGPQLHADVGDKVNIIFKNMATRPYSIHAHGVKTESSTVTPTAPGETRTYIWKIPERSGAGMGDSPCIPWVYYSTVDRVKDLFSGLIGPLIVCRKHYLKVSNPIKKLEFSLLFLVFDENESWYLDDNIKTYSDHPEKVDKANEEFMESNKMHAINGRMFGNLQGLTMHVGNEVDLHSVHFHGHSFQYQHRGIYTSDVFDLFPGTYQTLEMTPKTPGIWLLHCHVTDHIHAGMETTYTVLPNEEIKSG.

The signal sequence occupies residues 1–19 (MKIFLLCIFLILCGTSVWA). 3 Plastocyanin-like domains span residues 20–200 (KDKH…LIHC), 209–357 (KEKN…VQDC), and 370–554 (NVRH…MKIC). Na(+) is bound by residues tyrosine 55, glycine 64, and tyrosine 67. Cu(2+)-binding residues include histidine 120 and histidine 122. Histidine 120 serves as a coordination point for O2. Lysine 128 contacts Ca(2+). N-linked (GlcNAc...) asparagine glycosylation is present at asparagine 138. Ca(2+) is bound by residues glutamine 143, aspartate 146, and aspartate 147. A disulfide bridge links cysteine 174 with cysteine 200. Residues histidine 180 and histidine 182 each contribute to the Cu(2+) site. Residue histidine 180 participates in O2 binding. Asparagine 227 carries an N-linked (GlcNAc...) asparagine glycan. Serine 256 contacts Na(+). The cysteines at positions 276 and 357 are disulfide-linked. Cu(2+) contacts are provided by histidine 295, cysteine 338, and histidine 343. Residues phenylalanine 408, glycine 417, and tyrosine 420 each contribute to the Na(+) site. An intrachain disulfide couples cysteine 530 to cysteine 554. N-linked (GlcNAc...) asparagine glycosylation is found at asparagine 556 and asparagine 582. In terms of domain architecture, Plastocyanin-like 4 spans 564–712 (RLKNVDKEFY…MKQKYTVSQC (149 aa)). Serine 611 contributes to the Na(+) binding site. A disulfide bridge connects residues cysteine 631 and cysteine 712. 4 residues coordinate Cu(2+): histidine 650, cysteine 693, histidine 698, and methionine 703. Cysteine 693 functions as the Nucleophile; for glutathione peroxidase activity in the catalytic mechanism. Serine 716 carries the phosphoserine modification. Plastocyanin-like domains follow at residues 724 to 894 (GERT…LIVC) and 902 to 1044 (SNPI…PNEE). N-linked (GlcNAc...) asparagine glycosylation occurs at asparagine 756. The Na(+) site is built by phenylalanine 761, glycine 770, and tyrosine 773. Cysteine 868 and cysteine 894 are joined by a disulfide. N-linked (GlcNAc...) asparagine glycosylation occurs at asparagine 920. Serine 949 contacts Na(+). 8 residues coordinate Cu(2+): histidine 977, histidine 980, histidine 982, histidine 1022, cysteine 1023, histidine 1024, histidine 1028, and methionine 1033. O2-binding residues include histidine 980 and histidine 982. Histidine 1024 contacts O2.

The protein belongs to the multicopper oxidase family. Found in a complex with MPO and LTF; interacts directly with MPO and LTF, which allows Fe(3+) incorporation into LTF, activation of CP ferroxidase activity and protection of CP antioxidant properties by MPO. The cofactor is Cu(2+). Expressed by the liver and secreted in plasma. Also expressed in the hypothalamus, spleen and uterus. No expression in the cortex, heart, intestine or kidney.

It is found in the secreted. The enzyme catalyses 4 Fe(2+) + O2 + 4 H(+) = 4 Fe(3+) + 2 H2O. It catalyses the reaction 4 Cu(+) + O2 + 4 H(+) = 4 Cu(2+) + 2 H2O. The catalysed reaction is a hydroperoxide + 2 glutathione = an alcohol + glutathione disulfide + H2O. It carries out the reaction 4 nitric oxide + O2 + 2 H2O = 4 nitrite + 4 H(+). The enzyme catalyses 2 glutathione + H2O2 = glutathione disulfide + 2 H2O. In terms of biological role, multifunctional blue, copper-binding (6-7 atoms per molecule) glycoprotein. It has ferroxidase activity oxidizing Fe(2+) to Fe(3+) without releasing radical oxygen species. It is involved in iron transport across the cell membrane. Copper ions provide a large number of enzymatic activites. Oxidizes highly toxic ferrous ions to the ferric state for further incorporation onto apo-transferrins, catalyzes Cu(+) oxidation and promotes the oxidation of biogenic amines such as norepinephrin and serotonin. Provides Cu(2+) ions for the ascorbate-mediated deaminase degradation of the heparan sulfate chains of GPC1. Has glutathione peroxidase-like activity, can remove both hydrogen peroxide and lipid hydroperoxide in the presence of thiols. Also shows NO-oxidase and NO2 synthase activities that determine endocrine NO homeostasis. This chain is Ceruloplasmin (CP), found in Ovis aries (Sheep).